The sequence spans 28 residues: Conotoxin Cl5.3 (28 aa).

This sequence belongs to the conotoxin T superfamily. Post-translationally, contains 2 disulfide bonds that can be either 'C1-C3, C2-C4' or 'C1-C4, C2-C3', since these disulfide connectivities have been observed for conotoxins with cysteine framework V (for examples, see AC P0DQQ7 and AC P81755). As to expression, expressed by the venom duct.

The protein resides in the secreted. In Californiconus californicus (California cone), this protein is Conotoxin Cl5.3.